We begin with the raw amino-acid sequence, 312 residues long: Ankyrin repeat family A protein 2 (312 aa).

5 ANK repeats span residues 147 to 179, 180 to 212, 213 to 245, 246 to 278, and 279 to 312; these read ANSL…HTDE, EGFT…LLGK, GRES…EYDW, NGGT…IETD, and SGYN…NIRE.

In terms of assembly, interacts (via ANK repeats) with CCDC8 (via PxLPxI/L motif); mediates the interaction with the 3M complex which is composed of CCDC8, CUL7 and OBSL1. Interacts (via ANK repeats) with HDAC4 (via PxLPxI/L motif). Interacts (via ANK repeats) with HDAC5 (via PxLPxI/L motif). Interacts (via ANK repeats) with LRP2/megalin (via PxLPxI/L motif). Interacts (via ANK repeats) with RFX7 (via PxLPxI/L motif). Interacts with AHRR. Interacts with NEK6.

The protein resides in the cytoplasm. It localises to the cytoskeleton. The protein localises to the membrane. Functionally, may regulate the interaction between the 3M complex and the histone deacetylases HDAC4 and HDAC5. May also regulate LRP2/megalin. In Mus musculus (Mouse), this protein is Ankyrin repeat family A protein 2 (Ankra2).